Consider the following 309-residue polypeptide: Ribosomal RNA small subunit methyltransferase H (309 aa).

S-adenosyl-L-methionine-binding positions include 39–41 (GGH), Asp59, Phe83, Asp100, and Gln107.

Belongs to the methyltransferase superfamily. RsmH family.

It is found in the cytoplasm. The enzyme catalyses cytidine(1402) in 16S rRNA + S-adenosyl-L-methionine = N(4)-methylcytidine(1402) in 16S rRNA + S-adenosyl-L-homocysteine + H(+). Its function is as follows. Specifically methylates the N4 position of cytidine in position 1402 (C1402) of 16S rRNA. The sequence is that of Ribosomal RNA small subunit methyltransferase H from Delftia acidovorans (strain DSM 14801 / SPH-1).